Consider the following 175-residue polypeptide: Adenine phosphoribosyltransferase (175 aa).

Belongs to the purine/pyrimidine phosphoribosyltransferase family. As to quaternary structure, homodimer.

Its subcellular location is the cytoplasm. It catalyses the reaction AMP + diphosphate = 5-phospho-alpha-D-ribose 1-diphosphate + adenine. The protein operates within purine metabolism; AMP biosynthesis via salvage pathway; AMP from adenine: step 1/1. Functionally, catalyzes a salvage reaction resulting in the formation of AMP, that is energically less costly than de novo synthesis. This Lactobacillus gasseri (strain ATCC 33323 / DSM 20243 / BCRC 14619 / CIP 102991 / JCM 1131 / KCTC 3163 / NCIMB 11718 / NCTC 13722 / AM63) protein is Adenine phosphoribosyltransferase.